The sequence spans 104 residues: Large ribosomal subunit protein uL24 (104 aa).

Belongs to the universal ribosomal protein uL24 family. As to quaternary structure, part of the 50S ribosomal subunit.

One of two assembly initiator proteins, it binds directly to the 5'-end of the 23S rRNA, where it nucleates assembly of the 50S subunit. In terms of biological role, one of the proteins that surrounds the polypeptide exit tunnel on the outside of the subunit. This is Large ribosomal subunit protein uL24 from Afipia carboxidovorans (strain ATCC 49405 / DSM 1227 / KCTC 32145 / OM5) (Oligotropha carboxidovorans).